We begin with the raw amino-acid sequence, 551 residues long: Nicotianamine aminotransferase B (551 aa).

Positions K24–E127 are disordered. The span at G86–A96 shows a compositional bias: basic and acidic residues. The segment covering A111–A123 has biased composition (low complexity). K379 carries the N6-(pyridoxal phosphate)lysine modification.

Belongs to the class-I pyridoxal-phosphate-dependent aminotransferase family. The cofactor is pyridoxal 5'-phosphate. In terms of tissue distribution, expressed in roots, but not in leaves.

It catalyses the reaction nicotianamine + 2-oxoglutarate = 3''-deamino-3''-oxonicotianamine + L-glutamate. Involved in biosynthesis of mugineic acid family phytosiderophores. This is Nicotianamine aminotransferase B from Hordeum vulgare (Barley).